A 133-amino-acid polypeptide reads, in one-letter code: Cytidine deaminase (133 aa).

Residues 3 to 131 form the CMP/dCMP-type deaminase domain; it reads VDLDWVHHKL…EILKGGFRSY (129 aa). Position 43–45 (43–45) interacts with substrate; sequence NIE. C54 contributes to the Zn(2+) binding site. E56 functions as the Proton donor in the catalytic mechanism. The Zn(2+) site is built by C89 and C92.

Belongs to the cytidine and deoxycytidylate deaminase family. In terms of assembly, homodimer. The cofactor is Zn(2+).

It catalyses the reaction cytidine + H2O + H(+) = uridine + NH4(+). The enzyme catalyses 2'-deoxycytidine + H2O + H(+) = 2'-deoxyuridine + NH4(+). Its function is as follows. This enzyme scavenges exogenous and endogenous cytidine and 2'-deoxycytidine for UMP synthesis. The protein is Cytidine deaminase (cdd) of Mycoplasma pneumoniae (strain ATCC 29342 / M129 / Subtype 1) (Mycoplasmoides pneumoniae).